Consider the following 873-residue polypeptide: Tetratricopeptide repeat protein 16 (873 aa).

The interval 1–20 (MTDSDEDALKVDQGPSRDIP) is disordered. TPR repeat units follow at residues 61 to 94 (VREY…DPQL), 96 to 128 (DFYA…QQDN), 136 to 169 (TFVL…QPEK), 251 to 284 (AQQA…NPLD), 285 to 318 (PSLF…VTED), 331 to 364 (LLTY…EQQE), 365 to 398 (KGLY…SPQD), and 406 to 439 (GLLQ…NPQK). Disordered stretches follow at residues 553-626 (EELK…TSET) and 639-873 (SATA…YEAV). Over residues 571–582 (GEAEAPEEEEEK) the composition is skewed to acidic residues. The segment covering 583–593 (EKEKKEEKKSE) has biased composition (basic and acidic residues). Polar residues-rich tracts occupy residues 600-626 (ASLS…TSET), 639-663 (SATA…NNRE), and 675-693 (TQGQ…SQRR). A compositionally biased stretch (basic residues) spans 694 to 708 (NSSKTKATIHKRNSS). The segment covering 709 to 750 (KTKATQSQRRNSSKTRATQGQGQSSSKTEATQGQRQSSSEIE) has biased composition (polar residues). Over residues 763–784 (KTTRSPRQRPRKVKAARGRSWR) the composition is skewed to basic residues. Composition is skewed to polar residues over residues 800-828 (RSST…GQRS) and 836-860 (GKSQ…SLSK).

The protein is Tetratricopeptide repeat protein 16 (TTC16) of Homo sapiens (Human).